We begin with the raw amino-acid sequence, 348 residues long: Sesquiterpene synthase MGU_11447 (348 aa).

Mg(2+) contacts are provided by Asp91 and Asp96. The DDXXXD motif motif lies at 91–96 (DDLFVD). Arg184 is a binding site for substrate. Mg(2+) contacts are provided by Asn230, Ser234, and Glu238.

It belongs to the terpene synthase family. Requires Mg(2+) as cofactor.

It carries out the reaction (2E,6E)-farnesyl diphosphate + H2O = (+)-corvol ether B + diphosphate. It catalyses the reaction (2E,6E)-farnesyl diphosphate + H2O = (+)-corvol ether A + diphosphate. Its function is as follows. Terpene synthase that catalyzes the conversion of (2E,6E)-farnesyl diphosphate (FPP) into sesquiterpenes which are important for fungi-environment interactions. Produces a mixture consisting of 8 sesquiterpenes including corvol ethers A and B, as well as traces of epizonarene, gamma-cadinene, delta-cadinene, alpha-cadinene, alpha-cadinol, and an unidentified sesquiterpene. Produces both corvol ether A and corvol ether B in similar concentrations. The sequence is that of Sesquiterpene synthase MGU_11447 from Metarhizium guizhouense (strain ARSEF 977).